The chain runs to 274 residues: Thiamine kinase (274 aa).

The protein belongs to the thiamine kinase family.

It carries out the reaction thiamine + ATP = thiamine phosphate + ADP + H(+). It functions in the pathway cofactor biosynthesis; thiamine diphosphate biosynthesis; thiamine phosphate from thiamine: step 1/1. Its function is as follows. Catalyzes the ATP-dependent phosphorylation of thiamine to thiamine phosphate. Is involved in thiamine salvage. This chain is Thiamine kinase, found in Salmonella typhi.